A 181-amino-acid polypeptide reads, in one-letter code: MINGLKNYSQDALRAARYIGQGFFVTLDHMNRTPITIQYPYEKLIPSERFRGRIHFEFDKCIACEVCVRVCPINLPVVDWEFQKSMKKKQLKSYSIDFGVCIFCGNCVEFCPTNCLSMTEEYELSSYDRHELNYDQVALGRLPNPASKDPLVHPILGLGYLQKKLLTQSTESKTITNFDKS.

4Fe-4S ferredoxin-type domains lie at 52–81 and 92–121; these read GRIH…VDWE and KSYS…MTEE. Positions 61, 64, 67, 71, 101, 104, 107, and 111 each coordinate [4Fe-4S] cluster.

The protein belongs to the complex I 23 kDa subunit family. NDH is composed of at least 16 different subunits, 5 of which are encoded in the nucleus. [4Fe-4S] cluster is required as a cofactor.

It is found in the plastid. It localises to the chloroplast thylakoid membrane. It catalyses the reaction a plastoquinone + NADH + (n+1) H(+)(in) = a plastoquinol + NAD(+) + n H(+)(out). The catalysed reaction is a plastoquinone + NADPH + (n+1) H(+)(in) = a plastoquinol + NADP(+) + n H(+)(out). Its function is as follows. NDH shuttles electrons from NAD(P)H:plastoquinone, via FMN and iron-sulfur (Fe-S) centers, to quinones in the photosynthetic chain and possibly in a chloroplast respiratory chain. The immediate electron acceptor for the enzyme in this species is believed to be plastoquinone. Couples the redox reaction to proton translocation, and thus conserves the redox energy in a proton gradient. The chain is NAD(P)H-quinone oxidoreductase subunit I, chloroplastic from Staurastrum punctulatum (Green alga).